The chain runs to 141 residues: Ly6/PLAUR domain-containing protein 1 (141 aa).

The first 20 residues, 1 to 20 (MWVLGIAATFCGLFWLPGLA), serve as a signal peptide directing secretion. 6 disulfide bridges follow: cysteine 25–cysteine 54, cysteine 28–cysteine 37, cysteine 46–cysteine 71, cysteine 77–cysteine 100, cysteine 88–cysteine 97, and cysteine 101–cysteine 106. The region spanning 25–107 (CYQCEEFQLN…ISCCNTPLCN (83 aa)) is the UPAR/Ly6 domain. The N-linked (GlcNAc...) asparagine glycan is linked to asparagine 45. Residue glycine 115 is the site of GPI-anchor amidated glycine attachment. A propeptide spans 116–141 (SSASAIRPGLLTTLLFFHLALCLAHC) (removed in mature form).

As to quaternary structure, interacts with CHRNA4 and nAChRs containing alpha-4:beta-2 (CHRNA4:CHRNB2) and alpha-7 (CHRNA7) subunits. In terms of tissue distribution, preferentially expressed in the nervous system. Expressed in embryonic and postnatal postmitotic central and peripheral neurons including subpopulations of motor neurons, sensory neurons, interneurons and neurons of the autonomous nervous system. Expressed around the growing nerves in the limb bud. Expressed at high levels in specific brain regions such as the prefrontal cortex, amygdala, hippocampus, mediodorsal thalamus, dentate gyrus and specific brainstem nuclei (at protein level).

Its subcellular location is the cell membrane. Functionally, believed to act as a modulator of nicotinic acetylcholine receptors (nAChRs) activity. In vitro increases receptor desensitization and decreases affinity for ACh of alpha-4:beta-2-containing nAChRs. May play a role in the intracellular trafficking of alpha-4:beta-2 and alpha-7-containing nAChRs and may inhibit their expression at the cell surface. May be involved in the control of anxiety. This is Ly6/PLAUR domain-containing protein 1 (Lypd1) from Mus musculus (Mouse).